Reading from the N-terminus, the 380-residue chain is Cytochrome b (380 aa).

The next 4 membrane-spanning stretches (helical) occupy residues 34 to 54 (FGSL…LLAA), 78 to 99 (WLLR…YLHI), 114 to 134 (WNTG…GYVL), and 179 to 199 (FFAL…IHLT). Heme b is bound by residues histidine 84 and histidine 98. Heme b contacts are provided by histidine 183 and histidine 197. Histidine 202 provides a ligand contact to a ubiquinone. Transmembrane regions (helical) follow at residues 227 to 247 (LKDI…ALFH), 289 to 309 (LGGV…PFLH), 321 to 341 (LSQL…WIGS), and 348 to 368 (FIII…VLFP).

It belongs to the cytochrome b family. As to quaternary structure, the cytochrome bc1 complex contains 11 subunits: 3 respiratory subunits (MT-CYB, CYC1 and UQCRFS1), 2 core proteins (UQCRC1 and UQCRC2) and 6 low-molecular weight proteins (UQCRH/QCR6, UQCRB/QCR7, UQCRQ/QCR8, UQCR10/QCR9, UQCR11/QCR10 and a cleavage product of UQCRFS1). This cytochrome bc1 complex then forms a dimer. Heme b serves as cofactor.

It localises to the mitochondrion inner membrane. Component of the ubiquinol-cytochrome c reductase complex (complex III or cytochrome b-c1 complex) that is part of the mitochondrial respiratory chain. The b-c1 complex mediates electron transfer from ubiquinol to cytochrome c. Contributes to the generation of a proton gradient across the mitochondrial membrane that is then used for ATP synthesis. This Trogon curucui (Blue-crowned trogon) protein is Cytochrome b (MT-CYB).